The primary structure comprises 657 residues: Threonine--tRNA ligase (657 aa).

The TGS domain maps to 7–70 (QQASIAITLP…LCDANIEIVT (64 aa)). The segment at 253–555 (DHRKLGTELE…LIEHTAGNFP (303 aa)) is catalytic. C351, H402, and H532 together coordinate Zn(2+).

This sequence belongs to the class-II aminoacyl-tRNA synthetase family. Homodimer. It depends on Zn(2+) as a cofactor.

The protein resides in the cytoplasm. It catalyses the reaction tRNA(Thr) + L-threonine + ATP = L-threonyl-tRNA(Thr) + AMP + diphosphate + H(+). Its function is as follows. Catalyzes the attachment of threonine to tRNA(Thr) in a two-step reaction: L-threonine is first activated by ATP to form Thr-AMP and then transferred to the acceptor end of tRNA(Thr). Also edits incorrectly charged L-seryl-tRNA(Thr). This is Threonine--tRNA ligase from Chlorobium limicola (strain DSM 245 / NBRC 103803 / 6330).